The following is a 231-amino-acid chain: Phosphoheptose isomerase (231 aa).

The SIS domain maps to 35-190 (LAAVLGGGGR…CAAFDAALER (156 aa)). Residue 50 to 52 (NGG) coordinates substrate. Zn(2+)-binding residues include His-59 and Glu-63. Residues Glu-63, 92-93 (ND), 118-120 (STS), Ser-123, and Gln-170 each bind substrate. Zn(2+) is bound by residues Gln-170 and His-178. Low complexity-rich tracts occupy residues 197-206 (AAGSAASTGR) and 214-225 (ASTGRAAGAGRA). The tract at residues 197–231 (AAGSAASTGRAARRERAASTGRAAGAGRAAQRKRR) is disordered.

It belongs to the SIS family. GmhA subfamily. Requires Zn(2+) as cofactor.

It localises to the cytoplasm. It catalyses the reaction 2 D-sedoheptulose 7-phosphate = D-glycero-alpha-D-manno-heptose 7-phosphate + D-glycero-beta-D-manno-heptose 7-phosphate. It participates in carbohydrate biosynthesis; D-glycero-D-manno-heptose 7-phosphate biosynthesis; D-glycero-alpha-D-manno-heptose 7-phosphate and D-glycero-beta-D-manno-heptose 7-phosphate from sedoheptulose 7-phosphate: step 1/1. Its function is as follows. Catalyzes the isomerization of sedoheptulose 7-phosphate in D-glycero-D-manno-heptose 7-phosphate. The protein is Phosphoheptose isomerase of Streptomyces coelicolor (strain ATCC BAA-471 / A3(2) / M145).